A 69-amino-acid chain; its full sequence is Toxin Lc b (69 aa).

4 disulfides stabilise this stretch: Cys-3/Cys-20, Cys-13/Cys-41, Cys-45/Cys-56, and Cys-57/Cys-62.

This sequence belongs to the three-finger toxin family. Long-chain subfamily. Type II alpha-neurotoxin sub-subfamily. Expressed by the venom gland.

The protein localises to the secreted. Functionally, binds with high affinity to muscular nicotinic acetylcholine receptors (nAChRs), whereas it binds with a low affinity to neuronal alpha-7/CHRNA7 nAChRs. The sequence is that of Toxin Lc b from Laticauda colubrina (Yellow-lipped sea krait).